Consider the following 420-residue polypeptide: Argininosuccinate synthase (420 aa).

11–19 (AFSGGLDTT) contacts ATP. Residue tyrosine 88 participates in L-citrulline binding. Residue glycine 118 participates in ATP binding. The L-aspartate site is built by threonine 120, asparagine 124, and aspartate 125. Asparagine 124 contacts L-citrulline. Positions 128, 174, 183, 257, and 269 each coordinate L-citrulline. The interval 401-420 (KGAAVTDGSGDHAASEDTEE) is disordered. Residues 409–420 (SGDHAASEDTEE) are compositionally biased toward basic and acidic residues.

It belongs to the argininosuccinate synthase family. Type 1 subfamily. As to quaternary structure, homotetramer.

Its subcellular location is the cytoplasm. It carries out the reaction L-citrulline + L-aspartate + ATP = 2-(N(omega)-L-arginino)succinate + AMP + diphosphate + H(+). It participates in amino-acid biosynthesis; L-arginine biosynthesis; L-arginine from L-ornithine and carbamoyl phosphate: step 2/3. This Haloarcula marismortui (strain ATCC 43049 / DSM 3752 / JCM 8966 / VKM B-1809) (Halobacterium marismortui) protein is Argininosuccinate synthase.